The following is a 192-amino-acid chain: Soluble inorganic pyrophosphatase 2 (192 aa).

Lys38, Arg52, and Tyr64 together coordinate substrate. Mg(2+)-binding residues include Asp74, Asp79, and Asp111. Tyr148 contributes to the substrate binding site.

As to quaternary structure, monomer. Mg(2+) serves as cofactor. The N-terminus is blocked.

It is found in the mitochondrion. The enzyme catalyses diphosphate + H2O = 2 phosphate + H(+). The sequence is that of Soluble inorganic pyrophosphatase 2 (ppa2) from Chlamydomonas reinhardtii (Chlamydomonas smithii).